Consider the following 192-residue polypeptide: Small ribosomal subunit protein uS5 (192 aa).

An S5 DRBM domain is found at 20-83 (FVDRLVHINR…EAAKRGLIRV (64 aa)). The segment at 165–192 (ARRGLKVSALQARRRDAEPGSADSADAA) is disordered.

Belongs to the universal ribosomal protein uS5 family. As to quaternary structure, part of the 30S ribosomal subunit. Contacts proteins S4 and S8.

Functionally, with S4 and S12 plays an important role in translational accuracy. Located at the back of the 30S subunit body where it stabilizes the conformation of the head with respect to the body. This Methylobacterium sp. (strain 4-46) protein is Small ribosomal subunit protein uS5.